Here is a 76-residue protein sequence, read N- to C-terminus: Conotoxin PnMKLT1-1111 (76 aa).

Positions 1–22 (MKLTCMMIVAVLFLTAWTVVTA) are cleaved as a signal peptide. Residues 23–50 (VPHSNKRLANLYLKARHEMKNPEASNVD) constitute a propeptide that is removed on maturation. 3 cysteine pairs are disulfide-bonded: Cys53–Cys67, Cys60–Cys71, and Cys66–Cys75.

It belongs to the conotoxin O1 superfamily. As to expression, expressed by the venom duct.

Its subcellular location is the secreted. In Conus pennaceus (Feathered cone), this protein is Conotoxin PnMKLT1-1111.